The primary structure comprises 281 residues: MDLILLLKAVILGVVEGLTEFLPISSTGHLILVGDLLDFNDDRGKAFEVIIQFGAILAVCWEFREKLIKVTSSFASSPNARRFVLNLFIASIPAMGLGFLFGKHIKAVLFSPIPVASAFIVGTLIIFWAERRQQNLVDVSSYIKSVDDLRPLDALKVGLAQCAALIPGTSRSGATIIGGMLFGLPRAVATEFSFFLAIPVIGGATAYELLKLWKAPVAFSGEFTLAIVVGFIAAFISAFVCVRWLIHYVAHHNFIPFAWYRIAFGILVLFTSYTGLIAWSH.

7 helical membrane passes run 4–24 (ILLL…FLPI), 46–63 (AFEV…CWEF), 83–103 (FVLN…LFGK), 108–128 (VLFS…IIFW), 187–207 (AVAT…ATAY), 222–242 (EFTL…FVCV), and 257–277 (FAWY…TGLI).

The protein belongs to the UppP family.

The protein localises to the cell inner membrane. The catalysed reaction is di-trans,octa-cis-undecaprenyl diphosphate + H2O = di-trans,octa-cis-undecaprenyl phosphate + phosphate + H(+). Functionally, catalyzes the dephosphorylation of undecaprenyl diphosphate (UPP). Confers resistance to bacitracin. This Polynucleobacter necessarius subsp. necessarius (strain STIR1) protein is Undecaprenyl-diphosphatase.